The primary structure comprises 520 residues: Polycomb protein PHO (520 aa).

C2H2-type zinc fingers lie at residues 357-381, 386-408, 414-438, and 444-468; these read IACP…LHTH, HVCA…QLVH, FQCT…VRIH, and FVCP…ILTH. Residues 475 to 497 form a disordered region; that stretch reads TSISGKSGCSNAESNSQSEDTSA.

In terms of assembly, component of the Esc/E(z) complex, composed of Esc, E(z), Su(z)12, HDAC1/Rpd3 and Caf1-55. This complex is distinct from the PRC1 complex, which contains many other PcG proteins like Pc, Ph, Psc, Su(z)2. The two complexes however cooperate and interact together during the first 3 hours of development to establish PcG silencing. Component of the chromatin remodeling Ino80 complex. Interacts with Sfmbt to form a pho-repressive complex (PhoRC).

It is found in the nucleus. Functionally, polycomb group (PcG) protein that binds to the 5'-CNGCCATNNNNG-3' sequence found in the regulatory regions of many genes. PcG proteins act by forming multiprotein complexes, which are required to maintain the transcriptionally repressive state of homeotic genes throughout development. PcG proteins are not required to initiate repression, but to maintain it during later stages of development. They probably act via the methylation of histones, rendering chromatin heritably changed in its expressibility. Probably targets the Esc/E(z) complex to DNA. Necessary but not sufficient to recruit a functional PcG repressive complex that represses target genes, suggesting that the recruitment of the distinct PRC1 complex is also required to allow a subsequent repression. Proposed core component of the chromatin remodeling Ino80 complex which is involved in transcriptional regulation, DNA replication and probably DNA repair. In Drosophila melanogaster (Fruit fly), this protein is Polycomb protein PHO (pho).